The sequence spans 157 residues: UPF0262 protein Atu0536 (157 aa).

Belongs to the UPF0262 family.

This chain is UPF0262 protein Atu0536, found in Agrobacterium fabrum (strain C58 / ATCC 33970) (Agrobacterium tumefaciens (strain C58)).